We begin with the raw amino-acid sequence, 781 residues long: Acyl-CoA dehydrogenase family member 11 (781 aa).

Lys177 bears the N6-acetyllysine mark. Tyr325 bears the Phosphotyrosine mark. Position 392 is an N6-succinyllysine (Lys392). FAD contacts are provided by residues 505 to 515, 513 to 515, 539 to 541, and Ser541; these read FCMTEPDVASS, ASS, and WSS. Position 515 (Ser515) interacts with substrate. 630-633 contributes to the substrate binding site; the sequence is GPGR. FAD is bound by residues Arg658, Gln728, and 728 to 732; that span reads QVCGG. Gly756 contributes to the substrate binding site. Residues 757-759 and Glu759 each bind FAD; that span reads PDE.

This sequence belongs to the acyl-CoA dehydrogenase family. As to quaternary structure, homodimer. FAD is required as a cofactor.

Its subcellular location is the peroxisome. It localises to the mitochondrion membrane. The enzyme catalyses a 2,3-saturated acyl-CoA + oxidized [electron-transfer flavoprotein] + H(+) = a (2E)-enoyl-CoA + reduced [electron-transfer flavoprotein]. The catalysed reaction is docosanoyl-CoA + oxidized [electron-transfer flavoprotein] + H(+) = (2E)-docosenoyl-CoA + reduced [electron-transfer flavoprotein]. It catalyses the reaction tetracosanoyl-CoA + oxidized [electron-transfer flavoprotein] + H(+) = (2E)-tetracosenoyl-CoA + reduced [electron-transfer flavoprotein]. It carries out the reaction eicosanoyl-CoA + oxidized [electron-transfer flavoprotein] + H(+) = (2E)-eicosenoyl-CoA + reduced [electron-transfer flavoprotein]. The enzyme catalyses hexacosanoyl-CoA + oxidized [electron-transfer flavoprotein] + H(+) = (2E)-hexacosenoyl-CoA + reduced [electron-transfer flavoprotein]. The catalysed reaction is tricosanoyl-CoA + oxidized [electron-transfer flavoprotein] + H(+) = (2E)-tricosenoyl-CoA + reduced [electron-transfer flavoprotein]. The protein operates within lipid metabolism; fatty acid beta-oxidation. Its function is as follows. Acyl-CoA dehydrogenase, that exhibits maximal activity towards saturated C22-CoA. Probably participates in beta-oxydation and energy production but could also play a role in the metabolism of specific fatty acids to control fatty acids composition of cellular lipids in brain. In Pongo abelii (Sumatran orangutan), this protein is Acyl-CoA dehydrogenase family member 11 (ACAD11).